The following is a 54-amino-acid chain: Large ribosomal subunit protein bL33B (54 aa).

It belongs to the bacterial ribosomal protein bL33 family.

The chain is Large ribosomal subunit protein bL33B from Mycolicibacterium vanbaalenii (strain DSM 7251 / JCM 13017 / BCRC 16820 / KCTC 9966 / NRRL B-24157 / PYR-1) (Mycobacterium vanbaalenii).